A 397-amino-acid chain; its full sequence is Probable peptidoglycan glycosyltransferase FtsW (397 aa).

Topologically, residues 1–26 (MSPRNSALERFRQHQKIPEKRWQRLA) are cytoplasmic. Residues 27-47 (FPDVGLLLCWLALIVIGMVMV) traverse the membrane as a helical segment. Residues 48-69 (TSSSLSEAHVERLSTHHFAIRQ) lie on the Periplasmic side of the membrane. The helical transmembrane segment at 70-90 (GIFYVGSSIFAYIAFMLGTNF) threads the bilayer. The Cytoplasmic portion of the chain corresponds to 91 to 96 (YREKAK). Residues 97–117 (FILGLAFLGLLLVYAPGIGVV) form a helical membrane-spanning segment. Topologically, residues 118 to 126 (VNGSRRWLN) are periplasmic. Residues 127-147 (LGVINLQVGEFAKLAVFIFTA) form a helical membrane-spanning segment. At 148–159 (AYLQHHTQRLDH) the chain is on the cytoplasmic side. Residues 160-180 (SWQPIIGLLAVTACFALMFYL) traverse the membrane as a helical segment. The Periplasmic portion of the chain corresponds to 181 to 185 (QPDFG). Residues 186–206 (TMVVIVATVLGMLFLSGVSIW) form a helical membrane-spanning segment. Position 207 (Arg207) is a topological domain, cytoplasmic. The helical transmembrane segment at 208–228 (LLLLGVLIAPAMVWVLISESY) threads the bilayer. Residues 229-294 (RLRRLTTFIN…IFSIIAEETG (66 aa)) are Periplasmic-facing. A helical transmembrane segment spans residues 295-315 (LVGALIVMAILMILVWRAFAI). At 316 to 328 (GYLADRMRKRFSS) the chain is on the cytoplasmic side. A helical membrane pass occupies residues 329 to 349 (LLAYGIGLWLGLQSLINIGVT). Topologically, residues 350–359 (TGALPTKGLT) are periplasmic. The chain crosses the membrane as a helical span at residues 360 to 380 (LPLISYGGSSILMTSIALAIL). Over 381-397 (ARIDAESRFIARLEGKI) the chain is Cytoplasmic.

This sequence belongs to the SEDS family. FtsW subfamily.

The protein localises to the cell inner membrane. It catalyses the reaction [GlcNAc-(1-&gt;4)-Mur2Ac(oyl-L-Ala-gamma-D-Glu-L-Lys-D-Ala-D-Ala)](n)-di-trans,octa-cis-undecaprenyl diphosphate + beta-D-GlcNAc-(1-&gt;4)-Mur2Ac(oyl-L-Ala-gamma-D-Glu-L-Lys-D-Ala-D-Ala)-di-trans,octa-cis-undecaprenyl diphosphate = [GlcNAc-(1-&gt;4)-Mur2Ac(oyl-L-Ala-gamma-D-Glu-L-Lys-D-Ala-D-Ala)](n+1)-di-trans,octa-cis-undecaprenyl diphosphate + di-trans,octa-cis-undecaprenyl diphosphate + H(+). Its pathway is cell wall biogenesis; peptidoglycan biosynthesis. In terms of biological role, peptidoglycan polymerase that is essential for cell division. The polypeptide is Probable peptidoglycan glycosyltransferase FtsW (Dichelobacter nodosus (strain VCS1703A)).